A 424-amino-acid polypeptide reads, in one-letter code: Exodeoxyribonuclease 7 large subunit (424 aa).

This sequence belongs to the XseA family. As to quaternary structure, heterooligomer composed of large and small subunits.

The protein localises to the cytoplasm. It catalyses the reaction Exonucleolytic cleavage in either 5'- to 3'- or 3'- to 5'-direction to yield nucleoside 5'-phosphates.. Bidirectionally degrades single-stranded DNA into large acid-insoluble oligonucleotides, which are then degraded further into small acid-soluble oligonucleotides. The sequence is that of Exodeoxyribonuclease 7 large subunit from Cyanothece sp. (strain PCC 7425 / ATCC 29141).